The chain runs to 463 residues: MTVEKTMDKIVALAKNRGFIFPGSEIYGGLANSWDYGPLGVEFKNNVKKAWWKKFVQESPYNVGIDAAILMNREVWVASGHVGGFSDPLMDCKECKARCRADKLIEDYMQDKDENFESADGWSNEQLKDFIDKNNIACPKCGEHNFTDVRKFNLMFKTFQGVTEDAQSEIFLRPETAQGIFVNFKNAIRTTRRKMPFGMAQIGKSFRNEITPGNFTFRTREFEQMELEFFCKPGTDLEWFEYWRDYSWNFLLSLGLAKDNLRIREHAKEELAFYSKATVDIEYLFPFGWGELWGIADRTDYDLKQHMNHSGKDLTYLDPETNEKYLPYCIEPSLGADRVALAFLVDAYDEEELDGGDSRTVLRLHPALAPFKAAILPLTKKLKDKSLEVYSMLSKYFNVDYDEAGTIGKRYRREDEIGTPYCITIDYDTLEDNTVTIRDRDSMDQIRINIDELVKYISEKVEF.

2 residues coordinate substrate: arginine 100 and glutamate 175. ATP-binding positions include arginine 207–glutamate 209, phenylalanine 217–phenylalanine 222, glutamate 291–leucine 292, and glycine 335–arginine 338. Phenylalanine 222 to glutamate 226 provides a ligand contact to substrate. Substrate is bound at residue glutamate 331–glycine 335.

This sequence belongs to the class-II aminoacyl-tRNA synthetase family. In terms of assembly, homodimer.

It localises to the cytoplasm. It catalyses the reaction tRNA(Gly) + glycine + ATP = glycyl-tRNA(Gly) + AMP + diphosphate. Functionally, catalyzes the attachment of glycine to tRNA(Gly). This Clostridium tetani (strain Massachusetts / E88) protein is Glycine--tRNA ligase.